The chain runs to 511 residues: ADP,ATP carrier protein 4 (511 aa).

12 helical membrane-spanning segments follow: residues 34 to 54 (VSKF…QNLI), 70 to 90 (IISF…TAIY), 102 to 122 (IFYL…YVIF), 157 to 177 (FSLF…LLFW), 192 to 212 (FYPL…QFLE), 231 to 251 (FHTL…IIAI), 296 to 316 (LIAT…GPWK), 330 to 350 (AAFI…FVVL), 361 to 381 (FTAA…FFAV), 390 to 410 (LIIA…IGAI), 453 to 473 (LGKS…PSAS), and 476 to 496 (SIST…LWAT).

The protein belongs to the ADP/ATP translocase tlc family.

It is found in the cell membrane. Provides the rickettsial cell with host ATP in exchange for rickettsial ADP. This is an obligate exchange system. This energy acquiring activity is an important component of rickettsial parasitism. The protein is ADP,ATP carrier protein 4 (tlcD) of Rickettsia conorii (strain ATCC VR-613 / Malish 7).